We begin with the raw amino-acid sequence, 326 residues long: D-alanine--D-alanine ligase (326 aa).

Positions 121 to 320 constitute an ATP-grasp domain; the sequence is ISVLRPYGIK…LKDLFGSTIE (200 aa). 149–204 contributes to the ATP binding site; that stretch reads VDKVGLPCFVKANRAGSSFGVTKVKTEDEIISAAKTAFTEDDEAIIESFLDGTEVS. Residues glutamate 275, glutamate 287, and asparagine 289 each coordinate Mg(2+).

The protein belongs to the D-alanine--D-alanine ligase family. Mg(2+) serves as cofactor. It depends on Mn(2+) as a cofactor.

The protein localises to the cytoplasm. The catalysed reaction is 2 D-alanine + ATP = D-alanyl-D-alanine + ADP + phosphate + H(+). Its pathway is cell wall biogenesis; peptidoglycan biosynthesis. In terms of biological role, cell wall formation. The protein is D-alanine--D-alanine ligase of Christiangramia forsetii (strain DSM 17595 / CGMCC 1.15422 / KT0803) (Gramella forsetii).